Reading from the N-terminus, the 307-residue chain is Mitochondrial glycine transporter (307 aa).

Solcar repeat units follow at residues 8–87 (PRNS…MRSS), 115–199 (LTMY…SKQL), and 221–305 (TSTT…LVKR). 6 helical membrane-spanning segments follow: residues 14–39 (LIGG…TRIQ), 62–88 (GTLP…RSSL), 121–146 (LLTG…VRYE), 174–197 (GFGA…EKSK), 225–251 (VNTT…KTRM), and 280–298 (GLSM…AWGI).

The protein belongs to the mitochondrial carrier (TC 2.A.29) family. SLC25A38 subfamily.

It localises to the mitochondrion inner membrane. The catalysed reaction is glycine(in) = glycine(out). Its function is as follows. Mitochondrial glycine transporter that imports glycine into the mitochondrial matrix. Plays an important role in providing glycine for the first enzymatic step in heme biosynthesis, the condensation of glycine with succinyl-CoA to produce 5-aminolevulinate (ALA) in the mitochondrial matrix. The sequence is that of Mitochondrial glycine transporter from Saccharomyces cerevisiae (strain RM11-1a) (Baker's yeast).